We begin with the raw amino-acid sequence, 361 residues long: Mannose-1-phosphate guanylyltransferase 1 (361 aa).

Leucine 6 and valine 7 together coordinate GDP-alpha-D-mannose. The diphosphate site is built by glycine 9, glycine 11, threonine 12, arginine 13, and lysine 23. GDP-alpha-D-mannose contacts are provided by glycine 85, asparagine 109, aspartate 111, glycine 146, and asparagine 173.

Belongs to the transferase hexapeptide repeat family. In terms of assembly, interacts in vitro with CSN5A and CSN5B, but in planta only with CSN5B, which targets CYT1 for degradation in the dark by the 26S proteasome. Forms homodimers in the unliganded structure. The product-bound structure is composed of six dimers that form a dodecameric assembly.

It localises to the cytoplasm. The protein localises to the nucleus. The catalysed reaction is alpha-D-mannose 1-phosphate + GTP + H(+) = GDP-alpha-D-mannose + diphosphate. It participates in nucleotide-sugar biosynthesis; GDP-alpha-D-mannose biosynthesis; GDP-alpha-D-mannose from alpha-D-mannose 1-phosphate (GTP route): step 1/1. Functionally, essential protein during embryogenesis. Catalyzes a reaction of the Smirnoff-Wheeler pathway, the major route to ascorbate biosynthesis in plants. Plays an essential role in plant growth and development and cell-wall architecture. Provides GDP-mannose, used for cell wall carbohydrate biosynthesis, protein N-glycosylation, as well as for the biosynthesis of the antioxidant ascorbate. The polypeptide is Mannose-1-phosphate guanylyltransferase 1 (Arabidopsis thaliana (Mouse-ear cress)).